Consider the following 150-residue polypeptide: Ribonuclease H (150 aa).

Residues 3-144 (DKDMIEIWTD…ADGLARKGTD (142 aa)) enclose the RNase H type-1 domain. Residues Asp-12, Glu-50, Asp-72, and Asp-136 each contribute to the Mg(2+) site. Residues 129–150 (DEGNERADGLARKGTDEVRGRK) form a disordered region.

Belongs to the RNase H family. As to quaternary structure, monomer. Mg(2+) serves as cofactor.

Its subcellular location is the cytoplasm. It carries out the reaction Endonucleolytic cleavage to 5'-phosphomonoester.. In terms of biological role, endonuclease that specifically degrades the RNA of RNA-DNA hybrids. The protein is Ribonuclease H of Hyphomonas neptunium (strain ATCC 15444).